The following is a 246-amino-acid chain: Pyridoxine 5'-phosphate synthase (246 aa).

3-amino-2-oxopropyl phosphate is bound at residue Asn7. 9–10 (DH) is a binding site for 1-deoxy-D-xylulose 5-phosphate. A 3-amino-2-oxopropyl phosphate-binding site is contributed by Arg18. Residue His43 is the Proton acceptor of the active site. The 1-deoxy-D-xylulose 5-phosphate site is built by Arg45 and His50. The Proton acceptor role is filled by Glu70. Thr100 contributes to the 1-deoxy-D-xylulose 5-phosphate binding site. Residue His190 is the Proton donor of the active site. 3-amino-2-oxopropyl phosphate contacts are provided by residues Gly191 and 212-213 (GH).

It belongs to the PNP synthase family. As to quaternary structure, homooctamer; tetramer of dimers.

It is found in the cytoplasm. It catalyses the reaction 3-amino-2-oxopropyl phosphate + 1-deoxy-D-xylulose 5-phosphate = pyridoxine 5'-phosphate + phosphate + 2 H2O + H(+). The protein operates within cofactor biosynthesis; pyridoxine 5'-phosphate biosynthesis; pyridoxine 5'-phosphate from D-erythrose 4-phosphate: step 5/5. Catalyzes the complicated ring closure reaction between the two acyclic compounds 1-deoxy-D-xylulose-5-phosphate (DXP) and 3-amino-2-oxopropyl phosphate (1-amino-acetone-3-phosphate or AAP) to form pyridoxine 5'-phosphate (PNP) and inorganic phosphate. The protein is Pyridoxine 5'-phosphate synthase of Bordetella petrii (strain ATCC BAA-461 / DSM 12804 / CCUG 43448).